The following is a 152-amino-acid chain: Sulfur-rich protein (152 aa).

Polar residues predominate over residues 1–11; it reads MSTTPIVSGVT. Residues 1–21 are disordered; that stretch reads MSTTPIVSGVTSQNNSSENVS. The span at 12–21 shows a compositional bias: low complexity; the sequence is SQNNSSENVS. The next 2 helical transmembrane spans lie at 44 to 64 and 73 to 93; these read VGLA…LFIL and IYLA…ILSM.

It is found in the membrane. The protein is Sulfur-rich protein (srp) of Chlamydia muridarum (strain MoPn / Nigg).